A 1957-amino-acid polypeptide reads, in one-letter code: Sporulation-specific protein 15 (1957 aa).

2 stretches are compositionally biased toward low complexity: residues 1–12 (MSNQSSSGSNTS) and 19–28 (ASSLVSSAAS). Positions 1–102 (MSNQSSSGSN…STASSALPLT (102 aa)) are disordered. Over residues 58–83 (SQHEDSSEELKRQEVRGMRRHSDLSI) the composition is skewed to basic and acidic residues. Polar residues predominate over residues 90–102 (SEGSTASSALPLT). The residue at position 105 (Ser-105) is a Phosphoserine. 4 coiled-coil regions span residues 199–785 (KQSE…FTSL), 804–1235 (VNMQ…DLLD), 1320–1471 (KVVA…SLDD), and 1481–1723 (EKLG…EQHE).

The protein belongs to the MPC70 family. In terms of assembly, monomer.

The protein localises to the cytoplasm. It is found in the cytoskeleton. It localises to the microtubule organizing center. Its subcellular location is the spindle pole body. In terms of biological role, has a role in the initiation of spore membrane formation. This is Sporulation-specific protein 15 (spo15) from Schizosaccharomyces pombe (strain 972 / ATCC 24843) (Fission yeast).